Here is a 72-residue protein sequence, read N- to C-terminus: UPF0270 protein YheU (72 aa).

The protein belongs to the UPF0270 family.

This chain is UPF0270 protein YheU, found in Salmonella agona (strain SL483).